Here is a 466-residue protein sequence, read N- to C-terminus: 3-isopropylmalate dehydratase large subunit (466 aa).

[4Fe-4S] cluster is bound by residues cysteine 347, cysteine 407, and cysteine 410.

Belongs to the aconitase/IPM isomerase family. LeuC type 1 subfamily. As to quaternary structure, heterodimer of LeuC and LeuD. The cofactor is [4Fe-4S] cluster.

The catalysed reaction is (2R,3S)-3-isopropylmalate = (2S)-2-isopropylmalate. It functions in the pathway amino-acid biosynthesis; L-leucine biosynthesis; L-leucine from 3-methyl-2-oxobutanoate: step 2/4. Catalyzes the isomerization between 2-isopropylmalate and 3-isopropylmalate, via the formation of 2-isopropylmaleate. The sequence is that of 3-isopropylmalate dehydratase large subunit from Pectobacterium carotovorum subsp. carotovorum (strain PC1).